The following is a 663-amino-acid chain: MTVGVCYFPEHWSRERWETDISQMAEAGIEYVRMGEFAWRRIEPERGTFDFAWLDEAVELIGKFGMKAVLCTPTATPPKWLVDEHPDVRQREQDGTPREWGSRRFTCFNSPTYRSETERIVSVLTDRYADNPHVAGWQTDNEFGCHETVTCYCEDCGEAFSEWLADRYESVADLNDAWGTTFWSQQYDDFESIDPPKPTPAANHPSRVLAYERFSNDSVAEYNRLHAALIREANDEWFVTHNFMGGFSLDAFRLAADLDFLSWDSYPTGFVQDRQPDTPTVDELRAGNPDQVSMNHDLQRGAKGKPFWVMEQQPGDINWPPQSPQPADGAMRLWAHHAVAHGADAVVYFRWRRCRQGQEQYHAGLRRQDGSPDRGYREASTAADELFDLDSVDASVALVHDYESLWATRSQPLSPDWDYWNHLRTYYDALRARGVQVDIVSPEATLERYDAVVAPTLYLVGDELSTALTDYVDSGGCLLLGARTGEKDPYNRLHESLAPGPLTALTGAQVARHETLPDHVETRLSYDGATYEFRTWASWLAPEVGVPRGEYRTGEAAGNTAIVRNAAGDGSVTYCGCWPGDDLADALVTELLDAAGVEYTERFPDGVRVMERDGYTWALNFTSDPVTLTVPDSTGFLLGESTVDAFDTAVLDGSIRGVGLASE.

Residue R103 coordinates substrate. C107 is a binding site for Zn(2+). Residue N141 participates in substrate binding. E142 serves as the catalytic Proton donor. Residues C151, C153, and C156 each contribute to the Zn(2+) site. The active-site Nucleophile is the E311. Substrate-binding positions include W319 and 359-362 (EQYH).

This sequence belongs to the glycosyl hydrolase 42 family. As to quaternary structure, homodimer.

It carries out the reaction Hydrolysis of terminal non-reducing beta-D-galactose residues in beta-D-galactosides.. Requires 4 M NaCl for maximal activity. Loss of activity if DTT or beta-mercaptoethanol is omitted from buffers. Addition of 5-20 mM EDTA, 1 mM Cu(2+) or 1 mM Zn(2+) results in loss of activity. Its function is as follows. When overexpressed, cleaves several different substrates including o-nitrophenyl-beta-D-galactopyranoside (ONPG), chromogen 5-bromo-4-chloro-3-indolyl-beta-D-galactopyranoside (X-Gal) and lactulose, but not lactose. Also has beta-D-fucosidase activity. No beta-L-fucosidase, beta-glucosidase, beta-arabinosidase or beta-xylosidase activity. This chain is Beta-galactosidase BgaH, found in Haloferax lucentense (strain DSM 14919 / JCM 9276 / NCIMB 13854 / Aa 2.2) (Haloferax alicantei).